A 1745-amino-acid polypeptide reads, in one-letter code: DNA-directed RNA polymerase II subunit RPB1 (1745 aa).

The Zn(2+) site is built by Cys-67, Cys-70, Cys-77, His-80, Cys-107, Cys-110, Cys-148, and Cys-167. 3 residues coordinate Mg(2+): Asp-481, Asp-483, and Asp-485. The interval Pro-810–Glu-822 is bridging helix. Residue Lys-1247 forms a Glycyl lysine isopeptide (Lys-Gly) (interchain with G-Cter in ubiquitin) linkage. The tract at residues Asn-1530–His-1745 is disordered. The segment covering Ser-1546 to Ser-1730 has biased composition (low complexity). A run of 24 repeats spans residues Tyr-1552–Ser-1558, Tyr-1559–Ser-1565, Tyr-1566–Ser-1572, Tyr-1573–Ser-1579, Tyr-1580–Ser-1586, Tyr-1587–Ser-1593, Tyr-1594–Ser-1600, Tyr-1601–Ser-1607, Tyr-1608–Ser-1614, Tyr-1615–Ser-1621, Tyr-1622–Ser-1628, Tyr-1629–Ser-1635, Tyr-1636–Ser-1642, Tyr-1643–Ser-1649, Tyr-1650–Ser-1656, Tyr-1657–Ser-1663, Tyr-1664–Ser-1670, Tyr-1671–Ser-1677, Tyr-1678–Ser-1684, Tyr-1685–Ser-1691, Tyr-1692–Ser-1698, Tyr-1699–Ser-1705, Tyr-1706–Ser-1712, and Tyr-1713–Gln-1719. The interval Tyr-1552–Ser-1726 is C-terminal domain (CTD); 25 X 7 AA approximate tandem repeats of Y-S-P-T-S-P-[TSAN]. A 25; approximate repeat occupies Tyr-1720–Ser-1726. A compositionally biased stretch (basic and acidic residues) spans Asn-1734–His-1745.

Belongs to the RNA polymerase beta' chain family. As to quaternary structure, component of the RNA polymerase II (Pol II) complex consisting of 12 subunits. In terms of processing, the tandem 7 residues repeats in the C-terminal domain (CTD) can be highly phosphorylated. The phosphorylation activates Pol II. Phosphorylation occurs mainly at residues 'Ser-2' and 'Ser-5' of the heptapeptide repeat. The phosphorylation state is believed to result from the balanced action of site-specific CTD kinases and phosphatase, and a 'CTD code' that specifies the position of Pol II within the transcription cycle has been proposed. Post-translationally, following transcription stress, the elongating form of RNA polymerase II (RNA pol IIo) is polyubiquitinated via 'Lys-63'-linkages on Lys-1247 at DNA damage sites without leading to degradation: ubiquitination promotes RNA pol IIo backtracking to allow access by the transcription-coupled nucleotide excision repair (TC-NER) machinery. Subsequent DEF1-dependent polyubiquitination by the elongin complex via 'Lys-48'-linkages may lead to proteasome-mediated degradation; presumably at stalled RNA pol II where TC-NER has failed, to halt global transcription and enable 'last resort' DNA repair pathways.

It localises to the nucleus. The enzyme catalyses RNA(n) + a ribonucleoside 5'-triphosphate = RNA(n+1) + diphosphate. Functionally, DNA-dependent RNA polymerase catalyzes the transcription of DNA into RNA using the four ribonucleoside triphosphates as substrates. Largest and catalytic component of RNA polymerase II which synthesizes mRNA precursors and many functional non-coding RNAs. Forms the polymerase active center together with the second largest subunit. Pol II is the central component of the basal RNA polymerase II transcription machinery. It is composed of mobile elements that move relative to each other. RPB1 is part of the core element with the central large cleft, the clamp element that moves to open and close the cleft and the jaws that are thought to grab the incoming DNA template. At the start of transcription, a single-stranded DNA template strand of the promoter is positioned within the central active site cleft of Pol II. A bridging helix emanates from RPB1 and crosses the cleft near the catalytic site and is thought to promote translocation of Pol II by acting as a ratchet that moves the RNA-DNA hybrid through the active site by switching from straight to bent conformations at each step of nucleotide addition. During transcription elongation, Pol II moves on the template as the transcript elongates. Elongation is influenced by the phosphorylation status of the C-terminal domain (CTD) of Pol II largest subunit (RPB1), which serves as a platform for assembly of factors that regulate transcription initiation, elongation, termination and mRNA processing. The polypeptide is DNA-directed RNA polymerase II subunit RPB1 (RPB1) (Eremothecium gossypii (strain ATCC 10895 / CBS 109.51 / FGSC 9923 / NRRL Y-1056) (Yeast)).